A 456-amino-acid polypeptide reads, in one-letter code: Bifunctional protein GlmU (456 aa).

The pyrophosphorylase stretch occupies residues 1-229 (MLNSAMSVVI…LSEVEGVNNR (229 aa)). UDP-N-acetyl-alpha-D-glucosamine-binding positions include 11–14 (LAAG), Lys25, Gln76, 81–82 (GT), 103–105 (YGD), Gly140, Glu154, Asn169, and Asn227. Mg(2+) is bound at residue Asp105. Asn227 provides a ligand contact to Mg(2+). The tract at residues 230-250 (LQLSRLERVYQSEQAEKLLLA) is linker. The N-acetyltransferase stretch occupies residues 251–456 (GVMLRDPARF…QGWQRPAKKK (206 aa)). Positions 333 and 351 each coordinate UDP-N-acetyl-alpha-D-glucosamine. His363 (proton acceptor) is an active-site residue. Residues Tyr366 and Asn377 each contribute to the UDP-N-acetyl-alpha-D-glucosamine site. Acetyl-CoA is bound by residues Ala380, 386–387 (NY), Ser405, Ala423, and Arg440.

It in the N-terminal section; belongs to the N-acetylglucosamine-1-phosphate uridyltransferase family. In the C-terminal section; belongs to the transferase hexapeptide repeat family. In terms of assembly, homotrimer. Requires Mg(2+) as cofactor.

It localises to the cytoplasm. The catalysed reaction is alpha-D-glucosamine 1-phosphate + acetyl-CoA = N-acetyl-alpha-D-glucosamine 1-phosphate + CoA + H(+). It catalyses the reaction N-acetyl-alpha-D-glucosamine 1-phosphate + UTP + H(+) = UDP-N-acetyl-alpha-D-glucosamine + diphosphate. It participates in nucleotide-sugar biosynthesis; UDP-N-acetyl-alpha-D-glucosamine biosynthesis; N-acetyl-alpha-D-glucosamine 1-phosphate from alpha-D-glucosamine 6-phosphate (route II): step 2/2. The protein operates within nucleotide-sugar biosynthesis; UDP-N-acetyl-alpha-D-glucosamine biosynthesis; UDP-N-acetyl-alpha-D-glucosamine from N-acetyl-alpha-D-glucosamine 1-phosphate: step 1/1. Its pathway is bacterial outer membrane biogenesis; LPS lipid A biosynthesis. Catalyzes the last two sequential reactions in the de novo biosynthetic pathway for UDP-N-acetylglucosamine (UDP-GlcNAc). The C-terminal domain catalyzes the transfer of acetyl group from acetyl coenzyme A to glucosamine-1-phosphate (GlcN-1-P) to produce N-acetylglucosamine-1-phosphate (GlcNAc-1-P), which is converted into UDP-GlcNAc by the transfer of uridine 5-monophosphate (from uridine 5-triphosphate), a reaction catalyzed by the N-terminal domain. The sequence is that of Bifunctional protein GlmU from Citrobacter koseri (strain ATCC BAA-895 / CDC 4225-83 / SGSC4696).